Consider the following 427-residue polypeptide: UPF0229 protein YeaH (427 aa).

The segment covering 79–90 (NDHFVQNDRIER) has biased composition (basic and acidic residues). Residues 79 to 110 (NDHFVQNDRIERPQGGGGGSGSGQGQASQDGE) form a disordered region. Residues 92–102 (QGGGGGSGSGQ) show a composition bias toward gly residues.

This sequence belongs to the UPF0229 family.

This chain is UPF0229 protein YeaH, found in Escherichia coli O9:H4 (strain HS).